The primary structure comprises 314 residues: Malate dehydrogenase (314 aa).

Residues 11-16 and D35 contribute to the NAD(+) site; that span reads GSGNIG. Residues R84 and R90 each coordinate substrate. NAD(+) contacts are provided by residues N97 and 120–122; that span reads ITN. The substrate site is built by N122 and R153. The active-site Proton acceptor is the H177.

This sequence belongs to the LDH/MDH superfamily. MDH type 3 family.

It catalyses the reaction (S)-malate + NAD(+) = oxaloacetate + NADH + H(+). In terms of biological role, catalyzes the reversible oxidation of malate to oxaloacetate. The polypeptide is Malate dehydrogenase (Rickettsia rickettsii (strain Iowa)).